A 208-amino-acid chain; its full sequence is LexA repressor (208 aa).

Positions 30 to 50 (VREIGKSVGLSSSSTVAAYLE) form a DNA-binding region, H-T-H motif. Active-site for autocatalytic cleavage activity residues include Ser-129 and Lys-167.

Belongs to the peptidase S24 family. In terms of assembly, homodimer.

It catalyses the reaction Hydrolysis of Ala-|-Gly bond in repressor LexA.. Represses a number of genes involved in the response to DNA damage (SOS response), including recA and lexA. In the presence of single-stranded DNA, RecA interacts with LexA causing an autocatalytic cleavage which disrupts the DNA-binding part of LexA, leading to derepression of the SOS regulon and eventually DNA repair. The polypeptide is LexA repressor (Lacticaseibacillus casei (strain BL23) (Lactobacillus casei)).